Here is a 324-residue protein sequence, read N- to C-terminus: MARRGKKKGRPISGWVIFDKPKGMGSTEAVSKIKWLFNAEKAGHAGTLDPLASGMLPIALGEATKTVPYVMDGTKIYRFTVSWGEERSTDDLEGVATKTSDNRPSRADVEALLPNYTGVISQVPPQFSAIKIDGERAYDLAREGETVEIPSREVEIDRLEIVGIPDADRTEFEVECSKGTYVRSLARDMGRDLGCYGHISELRRIEVAPFTEEDAVTLAELEQAWPPLPPKDEDGNVVEPTPRRDFSAIDALVIDTGAALDCLPQVPLTDDQAQRVRLGNPVILRGRDAPLEADEACVTTRGKLLAIGYIEHGQFKPKRVFTTG.

The active-site Nucleophile is the D49.

This sequence belongs to the pseudouridine synthase TruB family. Type 1 subfamily.

It carries out the reaction uridine(55) in tRNA = pseudouridine(55) in tRNA. In terms of biological role, responsible for synthesis of pseudouridine from uracil-55 in the psi GC loop of transfer RNAs. The protein is tRNA pseudouridine synthase B of Brucella anthropi (strain ATCC 49188 / DSM 6882 / CCUG 24695 / JCM 21032 / LMG 3331 / NBRC 15819 / NCTC 12168 / Alc 37) (Ochrobactrum anthropi).